Here is a 377-residue protein sequence, read N- to C-terminus: Succinyl-diaminopimelate desuccinylase (377 aa).

His-66 contacts Zn(2+). Residue Asp-68 is part of the active site. Asp-99 lines the Zn(2+) pocket. The Proton acceptor role is filled by Glu-133. Residues Glu-134, Glu-163, and His-349 each contribute to the Zn(2+) site.

The protein belongs to the peptidase M20A family. DapE subfamily. Homodimer. Requires Zn(2+) as cofactor. Co(2+) serves as cofactor.

The enzyme catalyses N-succinyl-(2S,6S)-2,6-diaminopimelate + H2O = (2S,6S)-2,6-diaminopimelate + succinate. It participates in amino-acid biosynthesis; L-lysine biosynthesis via DAP pathway; LL-2,6-diaminopimelate from (S)-tetrahydrodipicolinate (succinylase route): step 3/3. In terms of biological role, catalyzes the hydrolysis of N-succinyl-L,L-diaminopimelic acid (SDAP), forming succinate and LL-2,6-diaminopimelate (DAP), an intermediate involved in the bacterial biosynthesis of lysine and meso-diaminopimelic acid, an essential component of bacterial cell walls. The polypeptide is Succinyl-diaminopimelate desuccinylase (Legionella pneumophila (strain Lens)).